The following is a 160-amino-acid chain: MSDEEHHFESKADAGASKTFPQQAGTIRKNGYIVIKNRPCKVMEVSTSKTGKHGHAKCHFVGIDIFNGKKLEDIVPSSHNCDVPHVNRTDYQLIDISEDGFVSLLTETGNTKDDLRLPTDENLLSQIKDGFAEGKDLVVSVMSAMGEERICSLKDIGPKN.

Residues Met1–Ala12 are compositionally biased toward basic and acidic residues. Positions Met1–Pro21 are disordered. Lys52 is subject to Hypusine.

This sequence belongs to the eIF-5A family. In terms of processing, lys-53 undergoes hypusination, a unique post-translational modification that consists in the addition of a butylamino group from spermidine to lysine side chain, leading to the formation of the unusual amino acid hypusine. eIF-5As are the only known proteins to undergo this modification, which is essential for their function.

Translation factor that promotes translation elongation and termination, particularly upon ribosome stalling at specific amino acid sequence contexts. Binds between the exit (E) and peptidyl (P) site of the ribosome and promotes rescue of stalled ribosome: specifically required for efficient translation of polyproline-containing peptides as well as other motifs that stall the ribosome. Acts as a ribosome quality control (RQC) cofactor by joining the RQC complex to facilitate peptidyl transfer during CAT tailing step. This Manihot esculenta (Cassava) protein is Eukaryotic translation initiation factor 5A.